We begin with the raw amino-acid sequence, 224 residues long: Zinc finger C4H2 domain-containing protein (224 aa).

Positions 11–104 (LESIKEIRNK…RRLHDEYKPL (94 aa)) form a coiled coil. Residues 189–206 (CLSCHQQIHRNAPICPLC) form a C4H2-type zinc finger.

As to expression, expressed in fetal tissues, including in brain, intestine, lung, kidney and muscle. Isoform 1 is expressed in numerous fetal brain regions. Isoform 3 is highly expressed in numerous fetal brain regions and spinal cord.

It localises to the cytoplasm. Its subcellular location is the nucleus. The protein resides in the postsynaptic cell membrane. In terms of biological role, plays a role in interneurons differentiation. Involved in neuronal development and in neuromuscular junction formation. In Homo sapiens (Human), this protein is Zinc finger C4H2 domain-containing protein (ZC4H2).